Consider the following 276-residue polypeptide: Probable ABC transporter permease protein PH1036 (276 aa).

Helical transmembrane passes span 12 to 32, 75 to 95, 109 to 129, 137 to 157, 186 to 206, and 241 to 261; these read IAWS…MASV, IVAI…AYAF, FIVL…YFLL, TFRG…IFFM, IVLP…FTWV, and GLLT…YALF. The region spanning 70–261 is the ABC transmembrane type-1 domain; sequence LKNSLIVAIP…LVPLLVYALF (192 aa).

Belongs to the binding-protein-dependent transport system permease family. MalFG subfamily.

The protein resides in the cell membrane. Its function is as follows. Probably part of a binding-protein-dependent transport system PH1036/38/39. Probably responsible for the translocation of the substrate across the membrane. The polypeptide is Probable ABC transporter permease protein PH1036 (Pyrococcus horikoshii (strain ATCC 700860 / DSM 12428 / JCM 9974 / NBRC 100139 / OT-3)).